Consider the following 2564-residue polypeptide: Highly reducing polyketide synthase 40 (2564 aa).

Positions 8-432 (PEPIAIIGMS…GTNAHVIVDR (425 aa)) constitute a Ketosynthase family 3 (KS3) domain. Catalysis depends on for beta-ketoacyl synthase activity residues Cys-181, His-317, and His-358. Positions 435-482 (EHNHSNGTNGTNGTHHHNGTNGSNGNGTNGTNGTNGTDGFHDTESISD) are disordered. Residues 439 to 455 (SNGTNGTNGTHHHNGTN) show a composition bias toward low complexity. Residues 473–482 (GFHDTESISD) show a composition bias toward basic and acidic residues. Positions 580–914 (YVFGGQGAQY…SAAENMLRTL (335 aa)) are malonyl-CoA:ACP transacylase (MAT) domain. An N-terminal hotdog fold region spans residues 973–1113 (HELLGNLSAD…GRIRAVVDQG (141 aa)). The dehydratase (DH) domain stretch occupies residues 973 to 1280 (HELLGNLSAD…GLRTAQLPSD (308 aa)). Residues 973–1283 (HELLGNLSAD…TAQLPSDVVN (311 aa)) form the PKS/mFAS DH domain. The Proton acceptor; for dehydratase activity role is filled by His-1005. The C-terminal hotdog fold stretch occupies residues 1130–1283 (AASVPHHITS…TAQLPSDVVN (154 aa)). Asp-1199 (proton donor; for dehydratase activity) is an active-site residue. The tract at residues 1451-1556 (LEVGGGTASA…RQLLRPGGTL (106 aa)) is methyltransferase (CMet) domain. The interval 1854-2167 (GLLETFRWVD…AGKHMGKVIL (314 aa)) is enoyl reductase (ER) domain. Positions 2191-2370 (ATYLLVGGFG…SFAIDVGVVS (180 aa)) are ketoreductase (KR) domain. Positions 2472-2549 (EALDAVGQAV…ELIHLVAGKS (78 aa)) constitute a Carrier domain. Residue Ser-2509 is modified to O-(pantetheine 4'-phosphoryl)serine.

Its pathway is secondary metabolite biosynthesis. Its function is as follows. Highly reducing polyketide synthase; part of the gene cluster that mediates the biosynthesis of the lipopeptides W493 A and B. W493 A and B consist of six amino acid residues D-allo-thr, L-Ala, D-Ala, L-Gln, D-Tyr, and L-Val/L-Ile linked to a 3-hydroxy-4-methyltetradecanoic acid polyketide chain. The biosynthesis starts with formation of the linear polyketide chain by the highly reducing polyketide synthase PKS40. The gene cluster contains a putative acyl-CoA ligase (FPSE_09184) for formation of a CoA thioester polyketide. The thiol bond could be hydrolyzed by the putative thioesterase (FPSE_09186) and then accepted by the first T domain in module 1 of NRPS32. The second T domain is responsible for accepting a threonine, which is adenylated by the A domain and epimerized to the D-allo-threonine formed by the E domain. The five successive modules incorporate Ala, Ala, Gln, Tyr, and Val/Ile into the final product, which is released by cyclization. The sequence is that of Highly reducing polyketide synthase 40 from Fusarium pseudograminearum (strain CS3096) (Wheat and barley crown-rot fungus).